We begin with the raw amino-acid sequence, 156 residues long: Small ribosomal subunit protein uS7 (156 aa).

Belongs to the universal ribosomal protein uS7 family. As to quaternary structure, part of the 30S ribosomal subunit. Contacts proteins S9 and S11.

Functionally, one of the primary rRNA binding proteins, it binds directly to 16S rRNA where it nucleates assembly of the head domain of the 30S subunit. Is located at the subunit interface close to the decoding center, probably blocks exit of the E-site tRNA. The polypeptide is Small ribosomal subunit protein uS7 (Synechococcus sp. (strain WH7803)).